Consider the following 953-residue polypeptide: UPF0746 protein DDB_G0281301 (953 aa).

Residues 1–10 show a composition bias toward basic and acidic residues; that stretch reads MVNNKRKEIE. The interval 1–23 is disordered; the sequence is MVNNKRKEIENQENDNNDDNDGL. Acidic residues predominate over residues 11–21; the sequence is NQENDNNDDND. An SAP domain is found at 35–69; sequence YDSIRSKELQTIAKSLGLPIIGKKQEIYKRIEGYF.

It belongs to the UPF0746 family.

This is UPF0746 protein DDB_G0281301 from Dictyostelium discoideum (Social amoeba).